The primary structure comprises 316 residues: Olfactory receptor 6B9 (316 aa).

The Extracellular portion of the chain corresponds to methionine 1 to glutamine 22. 2 N-linked (GlcNAc...) asparagine glycosylation sites follow: asparagine 3 and asparagine 6. The chain crosses the membrane as a helical span at residues isoleucine 23–isoleucine 43. Residues isoleucine 44–methionine 64 lie on the Cytoplasmic side of the membrane. A helical transmembrane segment spans residues serine 65 to phenylalanine 85. Residues arginine 86–threonine 97 lie on the Extracellular side of the membrane. An intrachain disulfide couples cysteine 95 to cysteine 187. The chain crosses the membrane as a helical span at residues glutamine 98–tyrosine 118. The Cytoplasmic segment spans residues aspartate 119–valine 132. Residues methionine 133–isoleucine 153 form a helical membrane-spanning segment. The Extracellular portion of the chain corresponds to serine 154–alanine 199. Residues leucine 200–valine 220 form a helical membrane-spanning segment. Over serine 221–serine 237 the chain is Cytoplasmic. A helical transmembrane segment spans residues threonine 238 to valine 258. The Extracellular portion of the chain corresponds to arginine 259 to asparagine 269. Residues lysine 270–leucine 290 form a helical membrane-spanning segment. The Cytoplasmic segment spans residues arginine 291–serine 316.

It belongs to the G-protein coupled receptor 1 family. As to expression, olfactory epithelium.

Its subcellular location is the cell membrane. In terms of biological role, odorant receptor. The chain is Olfactory receptor 6B9 from Mus musculus (Mouse).